A 101-amino-acid chain; its full sequence is Chaperone modulatory protein CbpM (101 aa).

It belongs to the CbpM family.

Functionally, interacts with CbpA and inhibits both the DnaJ-like co-chaperone activity and the DNA binding activity of CbpA. Together with CbpA, modulates the activity of the DnaK chaperone system. Does not inhibit the co-chaperone activity of DnaJ. This Pseudomonas entomophila (strain L48) protein is Chaperone modulatory protein CbpM.